A 241-amino-acid chain; its full sequence is Large ribosomal subunit protein uL3 (241 aa).

Disordered stretches follow at residues 139–166 (VSHR…PGHM) and 209–241 (KKPL…KEGA). Q151 carries the N5-methylglutamine modification.

It belongs to the universal ribosomal protein uL3 family. As to quaternary structure, part of the 50S ribosomal subunit. Forms a cluster with proteins L14 and L19. In terms of processing, methylated by PrmB.

Its function is as follows. One of the primary rRNA binding proteins, it binds directly near the 3'-end of the 23S rRNA, where it nucleates assembly of the 50S subunit. In Nitrobacter hamburgensis (strain DSM 10229 / NCIMB 13809 / X14), this protein is Large ribosomal subunit protein uL3.